The following is a 672-amino-acid chain: Spermatid perinuclear RNA-binding protein (672 aa).

Positions 5 to 363 (RSFANDDRHV…ALKRPFEDGL (359 aa)) constitute a DZF domain. The segment at 349 to 371 (GAGSSALKRPFEDGLGDDKDPNK) is disordered. Basic and acidic residues predominate over residues 357–371 (RPFEDGLGDDKDPNK). The region spanning 387-453 (DLMNALMRLN…AVKVLQAMGY (67 aa)) is the DRBM 1 domain. Basic and acidic residues predominate over residues 467-476 (DEKSDNESKN). Positions 467–514 (DEKSDNESKNDTVSSNSSNNTGNSTTETSSTLEVRTQGPILTASGKNP) are disordered. The span at 477–497 (DTVSSNSSNNTGNSTTETSST) shows a compositional bias: low complexity. One can recognise a DRBM 2 domain in the interval 510–576 (SGKNPVMELN…ALAALEKLFS (67 aa)). Asymmetric dimethylarginine is present on residues Arg-612 and Arg-617.

Interacts with EIF2AK2. Associates with microtubules; it is unsure whether such interaction is direct or indirect. In terms of tissue distribution, isoform 2 is expressed in spermatocytes (at protein level). Expressed in testis, thymus, ovary, liver, kidney, heart, spleen and brain. Expressed in cortex, dentate gyrus and Purkinje cell layer and granule cells of the cerebellum.

The protein resides in the cytoplasm. The protein localises to the cytoskeleton. Functionally, involved in spermatogenesis and sperm function. Plays a role in regulation of cell growth. Binds to double-stranded DNA and RNA. Binds most efficiently to poly(I:C) RNA than to poly(dI:dC) DNA. Also binds to single-stranded poly(G) RNA. Binds non-specifically to the mRNA PRM1 3'-UTR and adenovirus VA RNA. The protein is Spermatid perinuclear RNA-binding protein (Strbp) of Mus musculus (Mouse).